The primary structure comprises 122 residues: MKVFIILGALNAMMAVGTGAFGAHGLEGKLSDKYMSIWEKATTYQMYHGLGLLVIGLISGTTSINVNWAGWLLFFGIVFFSGSLYFLALTQVRILGAITPIGGVLFIIGWLVLVIATLKFAG.

4 consecutive transmembrane segments (helical) span residues 3–23 (VFII…AFGA), 46–66 (MYHG…SINV), 69–89 (AGWL…FLAL), and 98–118 (ITPI…IATL).

This sequence belongs to the UPF0382 family.

Its subcellular location is the cell membrane. This is UPF0382 membrane protein SERP0230 from Staphylococcus epidermidis (strain ATCC 35984 / DSM 28319 / BCRC 17069 / CCUG 31568 / BM 3577 / RP62A).